A 143-amino-acid polypeptide reads, in one-letter code: MGGQVIEVEVAGVRFLLRKDLRYTESDEWARLEDGVATVGITDFAQKELKDIVGVELPEKGRKVKKGEAVATVESIKATADIYAPLSGEIVDVNEKLLDQPELINDDPYGEGWIFKIKVEDPGEFESLLTPEQYVESVRKRKE.

A Lipoyl-binding domain is found at 36–118 (VATVGITDFA…YGEGWIFKIK (83 aa)). Position 77 is an N6-lipoyllysine (K77).

It belongs to the GcvH family. In terms of assembly, the glycine cleavage system is composed of four proteins: P, T, L and H. The cofactor is (R)-lipoate.

In terms of biological role, the glycine cleavage system catalyzes the degradation of glycine. The H protein shuttles the methylamine group of glycine from the P protein to the T protein. The polypeptide is Probable glycine cleavage system H protein (Aeropyrum pernix (strain ATCC 700893 / DSM 11879 / JCM 9820 / NBRC 100138 / K1)).